Reading from the N-terminus, the 188-residue chain is Ribosome maturation factor RimP (188 aa).

Belongs to the RimP family.

Its subcellular location is the cytoplasm. Functionally, required for maturation of 30S ribosomal subunits. The protein is Ribosome maturation factor RimP of Erythrobacter litoralis (strain HTCC2594).